The sequence spans 601 residues: Glutamyl-tRNA(Gln) amidotransferase subunit B, mitochondrial (601 aa).

The transit peptide at 1–52 directs the protein to the mitochondrion; that stretch reads MLQQWLRQSPRAARVLRGSCCRGPQSGSLRHSPLPTAPHRCIRSLQTSATES.

It belongs to the GatB/GatE family. GatB subfamily. As to quaternary structure, subunit of the heterotrimeric GatCAB amidotransferase (AdT) complex, composed of A, B and C subunits.

The protein localises to the mitochondrion. It catalyses the reaction L-glutamyl-tRNA(Gln) + L-glutamine + ATP + H2O = L-glutaminyl-tRNA(Gln) + L-glutamate + ADP + phosphate + H(+). Its function is as follows. Allows the formation of correctly charged Gln-tRNA(Gln) through the transamidation of misacylated Glu-tRNA(Gln) in the mitochondria. The reaction takes place in the presence of glutamine and ATP through an activated gamma-phospho-Glu-tRNA(Gln). The polypeptide is Glutamyl-tRNA(Gln) amidotransferase subunit B, mitochondrial (Aspergillus fumigatus (strain ATCC MYA-4609 / CBS 101355 / FGSC A1100 / Af293) (Neosartorya fumigata)).